The primary structure comprises 130 residues: Small ribosomal subunit protein uS9 (130 aa).

It belongs to the universal ribosomal protein uS9 family.

The protein is Small ribosomal subunit protein uS9 of Neisseria gonorrhoeae (strain ATCC 700825 / FA 1090).